Here is a 367-residue protein sequence, read N- to C-terminus: 3-isopropylmalate dehydrogenase (367 aa).

77–90 (GPKWDAVPYEVRPE) contributes to the NAD(+) binding site. Positions 97, 107, 135, and 226 each coordinate substrate. Asp226, Asp250, and Asp254 together coordinate Mg(2+). 290–302 (GSAPDIAGKGIAN) provides a ligand contact to NAD(+).

It belongs to the isocitrate and isopropylmalate dehydrogenases family. LeuB type 1 subfamily. Homodimer. It depends on Mg(2+) as a cofactor. Requires Mn(2+) as cofactor.

The protein resides in the cytoplasm. It carries out the reaction (2R,3S)-3-isopropylmalate + NAD(+) = 4-methyl-2-oxopentanoate + CO2 + NADH. It participates in amino-acid biosynthesis; L-leucine biosynthesis; L-leucine from 3-methyl-2-oxobutanoate: step 3/4. Functionally, catalyzes the oxidation of 3-carboxy-2-hydroxy-4-methylpentanoate (3-isopropylmalate) to 3-carboxy-4-methyl-2-oxopentanoate. The product decarboxylates to 4-methyl-2 oxopentanoate. In Mesorhizobium japonicum (strain LMG 29417 / CECT 9101 / MAFF 303099) (Mesorhizobium loti (strain MAFF 303099)), this protein is 3-isopropylmalate dehydrogenase.